The chain runs to 137 residues: Nucleoside diphosphate kinase (137 aa).

ATP is bound by residues lysine 9, phenylalanine 57, arginine 85, threonine 91, arginine 102, and asparagine 112. The active-site Pros-phosphohistidine intermediate is the histidine 115.

It belongs to the NDK family. In terms of assembly, homotetramer. It depends on Mg(2+) as a cofactor.

The protein localises to the cytoplasm. The catalysed reaction is a 2'-deoxyribonucleoside 5'-diphosphate + ATP = a 2'-deoxyribonucleoside 5'-triphosphate + ADP. It carries out the reaction a ribonucleoside 5'-diphosphate + ATP = a ribonucleoside 5'-triphosphate + ADP. Functionally, major role in the synthesis of nucleoside triphosphates other than ATP. The ATP gamma phosphate is transferred to the NDP beta phosphate via a ping-pong mechanism, using a phosphorylated active-site intermediate. The chain is Nucleoside diphosphate kinase from Campylobacter jejuni subsp. jejuni serotype O:2 (strain ATCC 700819 / NCTC 11168).